Consider the following 309-residue polypeptide: Ribosomal protein L11 methyltransferase (309 aa).

S-adenosyl-L-methionine is bound by residues threonine 144, glycine 165, aspartate 187, and asparagine 235.

The protein belongs to the methyltransferase superfamily. PrmA family.

It localises to the cytoplasm. It carries out the reaction L-lysyl-[protein] + 3 S-adenosyl-L-methionine = N(6),N(6),N(6)-trimethyl-L-lysyl-[protein] + 3 S-adenosyl-L-homocysteine + 3 H(+). Its function is as follows. Methylates ribosomal protein L11. The chain is Ribosomal protein L11 methyltransferase from Prochlorococcus marinus (strain MIT 9215).